The sequence spans 191 residues: GTP cyclohydrolase 1 (191 aa).

Zn(2+) contacts are provided by Cys80, His83, and Cys151.

Belongs to the GTP cyclohydrolase I family. As to quaternary structure, toroid-shaped homodecamer, composed of two pentamers of five dimers.

The enzyme catalyses GTP + H2O = 7,8-dihydroneopterin 3'-triphosphate + formate + H(+). It participates in cofactor biosynthesis; 7,8-dihydroneopterin triphosphate biosynthesis; 7,8-dihydroneopterin triphosphate from GTP: step 1/1. In Leifsonia xyli subsp. xyli (strain CTCB07), this protein is GTP cyclohydrolase 1.